We begin with the raw amino-acid sequence, 312 residues long: Heterotepalin-4 (312 aa).

The first 22 residues, 1 to 22 (MKSMLVVTISVWLILAPTSTWA), serve as a signal peptide directing secretion. Intrachain disulfides connect Cys-56–Cys-280 and Cys-107–Cys-128. Glu-197 is a catalytic residue. Positions 284 to 312 (YNQNAMFPQLIMSTYYNYMANLGDLFEEF) are excised as a propeptide.

It carries out the reaction Endohydrolysis of the N-glycosidic bond at one specific adenosine on the 28S rRNA.. In terms of biological role, inhibits protein synthesis in vitro. The polypeptide is Heterotepalin-4 (Phytolacca heterotepala (Mexican pokeweed)).